Consider the following 446-residue polypeptide: Exodeoxyribonuclease 7 large subunit (446 aa).

It belongs to the XseA family. Heterooligomer composed of large and small subunits.

It localises to the cytoplasm. It carries out the reaction Exonucleolytic cleavage in either 5'- to 3'- or 3'- to 5'-direction to yield nucleoside 5'-phosphates.. In terms of biological role, bidirectionally degrades single-stranded DNA into large acid-insoluble oligonucleotides, which are then degraded further into small acid-soluble oligonucleotides. The sequence is that of Exodeoxyribonuclease 7 large subunit from Geotalea uraniireducens (strain Rf4) (Geobacter uraniireducens).